The following is a 145-amino-acid chain: D-aminoacyl-tRNA deacylase (145 aa).

The Gly-cisPro motif, important for rejection of L-amino acids signature appears at 137 to 138 (GP).

Belongs to the DTD family. In terms of assembly, homodimer.

The protein localises to the cytoplasm. The catalysed reaction is glycyl-tRNA(Ala) + H2O = tRNA(Ala) + glycine + H(+). It catalyses the reaction a D-aminoacyl-tRNA + H2O = a tRNA + a D-alpha-amino acid + H(+). In terms of biological role, an aminoacyl-tRNA editing enzyme that deacylates mischarged D-aminoacyl-tRNAs. Also deacylates mischarged glycyl-tRNA(Ala), protecting cells against glycine mischarging by AlaRS. Acts via tRNA-based rather than protein-based catalysis; rejects L-amino acids rather than detecting D-amino acids in the active site. By recycling D-aminoacyl-tRNA to D-amino acids and free tRNA molecules, this enzyme counteracts the toxicity associated with the formation of D-aminoacyl-tRNA entities in vivo and helps enforce protein L-homochirality. The polypeptide is D-aminoacyl-tRNA deacylase (Shewanella putrefaciens (strain CN-32 / ATCC BAA-453)).